The chain runs to 272 residues: 5'-AMP-activated protein kinase subunit beta-2 (272 aa).

The segment at 1 to 52 (MGNTTSDRVSGERHGAKAARSEGAGGHAPGKEHKIMVGSTDDPSVFSLPDSK) is disordered. Position 39 is a phosphoserine (serine 39). The residue at position 40 (threonine 40) is a Phosphothreonine. Position 69 is a phosphoserine; by ULK1 (serine 69). Phosphoserine occurs at positions 95 and 108. The residue at position 148 (threonine 148) is a Phosphothreonine. 4 positions are modified to phosphoserine: serine 158, serine 170, serine 174, and serine 184.

The protein belongs to the 5'-AMP-activated protein kinase beta subunit family. In terms of assembly, AMPK is a heterotrimer of an alpha catalytic subunit (PRKAA1 or PRKAA2), a beta (PRKAB1 or PRKAB2) and a gamma non-catalytic subunits (PRKAG1, PRKAG2 or PRKAG3). In terms of processing, phosphorylated when associated with the catalytic subunit (PRKAA1 or PRKAA2). Phosphorylated by ULK1 and ULK2; leading to negatively regulate AMPK activity and suggesting the existence of a regulatory feedback loop between ULK1, ULK2 and AMPK.

Functionally, non-catalytic subunit of AMP-activated protein kinase (AMPK), an energy sensor protein kinase that plays a key role in regulating cellular energy metabolism. In response to reduction of intracellular ATP levels, AMPK activates energy-producing pathways and inhibits energy-consuming processes: inhibits protein, carbohydrate and lipid biosynthesis, as well as cell growth and proliferation. AMPK acts via direct phosphorylation of metabolic enzymes, and by longer-term effects via phosphorylation of transcription regulators. Also acts as a regulator of cellular polarity by remodeling the actin cytoskeleton; probably by indirectly activating myosin. Beta non-catalytic subunit acts as a scaffold on which the AMPK complex assembles, via its C-terminus that bridges alpha (PRKAA1 or PRKAA2) and gamma subunits (PRKAG1, PRKAG2 or PRKAG3). The chain is 5'-AMP-activated protein kinase subunit beta-2 (PRKAB2) from Homo sapiens (Human).